A 721-amino-acid polypeptide reads, in one-letter code: Nitrogen permease regulator 3 (721 aa).

Positions 1–21 (MSYNLPNPSLIGILLIISTHS) are cleaved as a signal peptide. Disordered stretches follow at residues 27–54 (YKQPPGLTKEPDEDEGEYDQEDIAETES) and 555–614 (DLEN…NINA). Acidic residues predominate over residues 37 to 54 (PDEDEGEYDQEDIAETES).

Belongs to the NPR3 family.

In terms of biological role, mediates inactivation of the TORC1 complex in response to amino acid starvation. Required for meiotic nuclear division. The polypeptide is Nitrogen permease regulator 3 (NPR3) (Scheffersomyces stipitis (strain ATCC 58785 / CBS 6054 / NBRC 10063 / NRRL Y-11545) (Yeast)).